Reading from the N-terminus, the 265-residue chain is Mlc titration factor A (265 aa).

Residues histidine 111, histidine 148, histidine 152, and glutamate 211 each coordinate Zn(2+).

Belongs to the MtfA family. As to quaternary structure, interacts with Mlc. The cofactor is Zn(2+).

It is found in the cytoplasm. Its function is as follows. Involved in the modulation of the activity of the glucose-phosphotransferase system (glucose-PTS). Interacts with the transcriptional repressor Mlc, preventing its interaction with DNA and leading to the modulation of expression of genes regulated by Mlc, including ptsG, which encodes the PTS system glucose-specific EIICB component. Functionally, shows zinc-dependent metallopeptidase activity. The sequence is that of Mlc titration factor A from Shigella sonnei (strain Ss046).